Reading from the N-terminus, the 243-residue chain is MTTNPKPAYQRILLKLSGEALQGSEGFGIDPTVLDRMAQEVKELVELGVQVGVVIGGGNLFRGAGLAKAGMNRVVGDHMGMLATVMNGLAMRDALHRAYVNARLMSAIPLNGVCDDYSWSDAIRELRQGRVVIFAAGTGNPFFTTDSAACLRGIEIEADVVLKATKVDGVYSADPVANPDAQLYDKLAYNDVLEKELKVMDLAAFTLARDHKMPIRVFNMNKPGALRRVVMGEAEGTLISDVQ.

Residue 15-18 (KLSG) participates in ATP binding. An involved in allosteric activation by GTP region spans residues 23–28 (GSEGFG). Glycine 57 contacts UMP. ATP-binding residues include glycine 58 and arginine 62. UMP contacts are provided by residues aspartate 77 and 138–145 (TGNPFFTT). ATP is bound by residues threonine 165, tyrosine 171, and aspartate 174.

It belongs to the UMP kinase family. As to quaternary structure, homohexamer.

The protein resides in the cytoplasm. It catalyses the reaction UMP + ATP = UDP + ADP. It functions in the pathway pyrimidine metabolism; CTP biosynthesis via de novo pathway; UDP from UMP (UMPK route): step 1/1. Allosterically activated by GTP. Inhibited by UTP. In terms of biological role, catalyzes the reversible phosphorylation of UMP to UDP. The sequence is that of Uridylate kinase from Vibrio cholerae serotype O1 (strain ATCC 39541 / Classical Ogawa 395 / O395).